A 199-amino-acid chain; its full sequence is MSKFAEPMARLIDELKKLPGVGNKSAQRLAFHILRSSNDDAELLADAVRDVKAKLRLCSICNNITDVDPCTYCANPTRNQQVICVVEEPTNISAVEKTRHFNGVYHVLHGALSPLHGVGPEHLRISNLIKRVEGGKAEEVILATNPTVEGEATATYLSKILKAEGVRVTRIATGVPVGSDIEYADEVTMQKAMEGRREL.

Residues 58–73 form a C4-type zinc finger; sequence CSICNNITDVDPCTYC. Positions 81-176 constitute a Toprim domain; the sequence is QVICVVEEPT…RVTRIATGVP (96 aa).

Belongs to the RecR family.

Its function is as follows. May play a role in DNA repair. It seems to be involved in an RecBC-independent recombinational process of DNA repair. It may act with RecF and RecO. In Koribacter versatilis (strain Ellin345), this protein is Recombination protein RecR.